The following is a 267-amino-acid chain: Undecaprenyl-diphosphatase (267 aa).

8 consecutive transmembrane segments (helical) span residues 1 to 21, 40 to 60, 83 to 103, 111 to 131, 144 to 164, 189 to 209, 219 to 239, and 245 to 265; these read MTLF…FLPV, GLAI…LYFW, AFLA…GLII, MMRS…VLYW, GWTL…LIPG, AMLM…ADVI, DGAL…ALMM, and VSFT…LVYA.

This sequence belongs to the UppP family.

It localises to the cell inner membrane. The enzyme catalyses di-trans,octa-cis-undecaprenyl diphosphate + H2O = di-trans,octa-cis-undecaprenyl phosphate + phosphate + H(+). Functionally, catalyzes the dephosphorylation of undecaprenyl diphosphate (UPP). Confers resistance to bacitracin. This chain is Undecaprenyl-diphosphatase, found in Roseobacter denitrificans (strain ATCC 33942 / OCh 114) (Erythrobacter sp. (strain OCh 114)).